The primary structure comprises 1735 residues: Cadherin-AgCad1 (1735 aa).

The first 30 residues, 1–30 (MKCVASKFNMWLHLGWLLGLLLVLLPLVRC), serve as a signal peptide directing secretion. At 31-1574 (QGWGEPRFET…ALTEADETLQ (1544 aa)) the chain is on the extracellular side. The tract at residues 166–1456 (VTDCLFNVYH…KVYIVSESNR (1291 aa)) is extracellular domain (EC). Cadherin domains follow at residues 171–273 (FNVY…PPIF), 280–378 (ERIM…IPEI), 379–498 (YMKP…VPKF), 499–620 (GRDE…PPQI), 621–757 (TLPR…APYF), 767–866 (SVKE…QPYH), 879–983 (EKIP…TPKL), 985–1109 (ELAA…TPSI), 1136–1235 (GSPL…EPTF), 1255–1350 (AEDP…PPVF), and 1351–1461 (QQRL…TFVF). Short sequence motifs (toxin-binding receptor motif) lie at residues 1344–1350 (NDNPPVF) and 1446–1456 (AKVYIVSESNR). Residues 1358–1569 (GITTNDRVPK…PLATEALTEA (212 aa)) are CR11-MPED, increases toxicity of activated Cry4B toxin, peptide alone is not toxic. Residues 1457-1569 (VTFVFLNSVE…PLATEALTEA (113 aa)) are membrane-proximal EC domain (MPED). A helical membrane pass occupies residues 1575-1595 (IILIVVSAALAVLCVILFVAF). The Cytoplasmic portion of the chain corresponds to 1596–1735 (FIKIRSLNRQ…ETDDELSHRF (140 aa)). Over residues 1701 to 1719 (SLNPMANGTDKSNDGAPTS) the composition is skewed to polar residues. Positions 1701–1735 (SLNPMANGTDKSNDGAPTSNHKKLDETDDELSHRF) are disordered. The segment covering 1722-1735 (KKLDETDDELSHRF) has biased composition (basic and acidic residues).

In terms of tissue distribution, larval midgut (at protein level).

The protein localises to the apical cell membrane. The protein resides in the cell projection. Its subcellular location is the microvillus membrane. In terms of biological role, cadherins are calcium-dependent cell adhesion proteins. They preferentially interact with themselves in a homophilic manner in connecting cells. Functionally, (Microbial infection) Binds to and is probably the functional receptor for B.thuringiensis subsp. israelensis (Bti) insecticidal toxin Cry4B. Trichoplusia ni insect cells stably transfected with this protein become suspectible to Cry4B; cells undergo oncosis, they bleb and ruffle after 20-40 minutes, swell after 40-60 minutes and lyse after 90 minutes. Following toxin treatment in the T.in insect system levels of intracellular 3',5'-cyclic AMP (cAMP) rise 12.5-fold; EDTA but not EGTA pretreatment prevents cAMP increase. Inorganic phosphate also rises 3.4-fold after toxin treatment. The sequence is that of Cadherin-AgCad1 from Anopheles gambiae (African malaria mosquito).